We begin with the raw amino-acid sequence, 121 residues long: Structural protein p14.5 (121 aa).

Disordered regions lie at residues 1-24 and 84-121; these read MADF…IGSL and TSLV…HKSK. Ala-2 carries the post-translational modification N-acetylalanine; by host. Over residues 104 to 121 the composition is skewed to basic residues; that stretch reads KPKKKKHLFPKLSSHKSK.

This sequence belongs to the asfivirus structural protein p14.5 family. Interacts with the major capsid protein. Interacts with host IRF3; this interaction interferes with the recruitment of IRF3 to TBK1. Acetylated.

It is found in the virion. Its function is as follows. Structural protein required for transport of intracellular particles from the assembly sites to the plasma membrane. Binds to both ssDNA and dsDNA. Suppressed the activation of the cGAS/STING pathway by interfering with the recruitment of IRF3 to TBK1, which in turn suppresses IRF3 phosphorylation, decreasing interferon production. The polypeptide is Structural protein p14.5 (Ornithodoros (relapsing fever ticks)).